The primary structure comprises 122 residues: MARLAGVDLPREKRLEVALTYIYGVGRTRALETLEATGISGDVRVKDLTDPQLVELRDYIEGNYKVEGDLRREVAADIRRKVEIGSYQGLRHRRGLPVHGQRTKTNARTRKGPKRTVAGKKK.

Residues 91 to 122 (RHRRGLPVHGQRTKTNARTRKGPKRTVAGKKK) form a disordered region.

The protein belongs to the universal ribosomal protein uS13 family. In terms of assembly, part of the 30S ribosomal subunit. Forms a loose heterodimer with protein S19. Forms two bridges to the 50S subunit in the 70S ribosome.

In terms of biological role, located at the top of the head of the 30S subunit, it contacts several helices of the 16S rRNA. In the 70S ribosome it contacts the 23S rRNA (bridge B1a) and protein L5 of the 50S subunit (bridge B1b), connecting the 2 subunits; these bridges are implicated in subunit movement. Contacts the tRNAs in the A and P-sites. The protein is Small ribosomal subunit protein uS13 of Kocuria rhizophila (strain ATCC 9341 / DSM 348 / NBRC 103217 / DC2201).